The chain runs to 250 residues: 23S rRNA (guanosine-2'-O-)-methyltransferase RlmB (250 aa).

Residues glycine 198, leucine 218, and leucine 227 each coordinate S-adenosyl-L-methionine.

It belongs to the class IV-like SAM-binding methyltransferase superfamily. RNA methyltransferase TrmH family. RlmB subfamily.

Its subcellular location is the cytoplasm. The catalysed reaction is guanosine(2251) in 23S rRNA + S-adenosyl-L-methionine = 2'-O-methylguanosine(2251) in 23S rRNA + S-adenosyl-L-homocysteine + H(+). In terms of biological role, specifically methylates the ribose of guanosine 2251 in 23S rRNA. The chain is 23S rRNA (guanosine-2'-O-)-methyltransferase RlmB from Pseudomonas syringae pv. tomato (strain ATCC BAA-871 / DC3000).